A 634-amino-acid polypeptide reads, in one-letter code: MTNSNLRTENHFDYVKITLASPDRVMEWGQRTLPNGQVVGEVTKPETINYRTLKPEMDGLFCEKIFGPSKDWECHCGKYKRVRHRGIVCERCGVEVTESRVRRHRMGFIKLAAPVSHVWYLKGIPSYVAILLDMPLRDVEQIVYFNCYVVLDPGDHKELKYKQLLTEDEWLEIEDEIYAEDSTIENEPIVGIGAEALKQLLEDLNLAEVAEQLREDISSSKGQKRAKLIKRLRVIDNFIATNARPEWMVLDAIPVIPPDLRPMVQLDGGRFATSDLNDLYRRVINRNNRLARLQEILAPEIIVRNEKRMLQEAVDALIDNGRRGRTVVGANNRPLKSLSDIIEGKQGRFRQNLLGKRVDYSGRSVIVVGPKLKMHQCGLPKEMAIELFQPFVIHRLIRQNIVNNIKAAKKLIQRADDEVMQVLQEVIEGHPILLNRAPTLHRLGIQAFEPKLVAGRAIQLHPLVCPAFNADFDGDQMAVHVPLAIEAQTEARMLMLASNNILSPATGDPIITPSQDMVLGSYYLTAIKPGASVPEFGDQSRTYAGLEDVIHAFEDKRLLLHDWVWVRFNGEVEDEDEIDKPLKAESLSDGTRIEQWTYRRDRFDEDGALISRYILTTVGRVVMNYTIIDAVAAA.

Zn(2+) contacts are provided by cysteine 74, cysteine 76, cysteine 89, and cysteine 92. Mg(2+)-binding residues include aspartate 471, aspartate 473, and aspartate 475.

This sequence belongs to the RNA polymerase beta' chain family. RpoC1 subfamily. As to quaternary structure, in cyanobacteria the RNAP catalytic core is composed of 2 alpha, 1 beta, 1 beta', 1 gamma and 1 omega subunit. When a sigma factor is associated with the core the holoenzyme is formed, which can initiate transcription. Mg(2+) is required as a cofactor. Requires Zn(2+) as cofactor.

It carries out the reaction RNA(n) + a ribonucleoside 5'-triphosphate = RNA(n+1) + diphosphate. DNA-dependent RNA polymerase catalyzes the transcription of DNA into RNA using the four ribonucleoside triphosphates as substrates. In Prochlorococcus marinus (strain MIT 9303), this protein is DNA-directed RNA polymerase subunit gamma.